The following is a 313-amino-acid chain: Synaptophysin (313 aa).

Topologically, residues 1–25 are cytoplasmic; the sequence is MLLLADMDVVNQLVAGGQFRVVKEP. Residues 21 to 227 form the MARVEL domain; sequence VVKEPLGFVK…NLWFVFKETG (207 aa). A helical membrane pass occupies residues 26 to 49; the sequence is LGFVKVLQWVFAIFAFATCGSYSG. At 50-106 the chain is on the vesicular side; the sequence is ELQLSVDCANKTKSDLNIEVEFEYPFRLHEVYFEAPTCQGDPKKIFLVGNYSSSAEF. An N-linked (GlcNAc...) asparagine glycan is attached at asparagine 59. The residue at position 81 (tyrosine 81) is a Phosphotyrosine. A glycan (N-linked (GlcNAc...) asparagine) is linked at asparagine 99. Residues 107-130 traverse the membrane as a helical segment; the sequence is FVTVAVFAFLYSMGALATYIFLQN. Residues 131–137 lie on the Cytoplasmic side of the membrane; it reads KYRENNK. The helical transmembrane segment at 138–161 threads the bilayer; the sequence is GPMLDFLATAVFAFMWLVSSSAWA. The Vesicular portion of the chain corresponds to 162-199; the sequence is KGLSDVKMATDPENIIKGMHVCHQPGNTCKELRDPVTS. Residues 200–223 form a helical membrane-spanning segment; the sequence is GLNTSVVFGFLNLVLWVGNLWFVF. Over 224-313 the chain is Cytoplasmic; it reads KETGWAAPFL…GAPTSFSNQM (90 aa). The segment at 238 to 313 is disordered; that stretch reads GAPEKQPAPG…GAPTSFSNQM (76 aa). A compositionally biased stretch (gly residues) spans 253–263; sequence AGYGQGPGGYG. Residues 254–304 form a repeats, Gly/Tyr-rich region; sequence GYGQGPGGYGPQDSYGPQGGYQPDYGQPASSGGGGYGPQGDYGQQGYGPQG. Residues 264–283 are compositionally biased toward low complexity; the sequence is PQDSYGPQGGYQPDYGQPAS. Over residues 284–302 the composition is skewed to gly residues; the sequence is SGGGGYGPQGDYGQQGYGP.

Belongs to the synaptophysin/synaptobrevin family. As to quaternary structure, homohexamer or homotetramer. Interacts with SRCIN1. Interacts with VAMP2; the interaction is inhibited by interaction of VAPM2 with SEPT8. In terms of processing, ubiquitinated; mediated by SIAH1 or SIAH2 and leading to its subsequent proteasomal degradation. Post-translationally, phosphorylated by SRC. In terms of tissue distribution, characteristic of a type of small (30-80 nm) neurosecretory vesicles, including presynaptic vesicles, but also vesicles of various neuroendocrine cells of both neuronal and epithelial phenotype.

The protein resides in the cytoplasmic vesicle. It is found in the secretory vesicle. Its subcellular location is the synaptic vesicle membrane. It localises to the synapse. The protein localises to the synaptosome. Possibly involved in structural functions as organizing other membrane components or in targeting the vesicles to the plasma membrane. Involved in the regulation of short-term and long-term synaptic plasticity. The sequence is that of Synaptophysin (SYP) from Bos taurus (Bovine).